A 567-amino-acid polypeptide reads, in one-letter code: Type II secretion system protein E (567 aa).

325 to 332 contributes to the ATP binding site; the sequence is GPTGSGKT.

This sequence belongs to the GSP E family. In terms of assembly, forms homooligomers; most probably hexamers. Interacts with XpsL/GspL.

The protein resides in the cell inner membrane. It carries out the reaction ATP + H2O + cellular proteinSide 1 = ADP + phosphate + cellular proteinSide 2.. Functionally, ATPase component of the type II secretion system required for the energy-dependent secretion of extracellular factors such as proteases and toxins from the periplasm. Acts as a molecular motor to provide the energy that is required for assembly of the pseudopilus and the extrusion of substrates generated in the cytoplasm. This is Type II secretion system protein E (xpsE) from Xanthomonas campestris pv. campestris (strain ATCC 33913 / DSM 3586 / NCPPB 528 / LMG 568 / P 25).